A 406-amino-acid chain; its full sequence is Cysteine desulfurase (406 aa).

Lysine 226 bears the N6-(pyridoxal phosphate)lysine mark. The Cysteine persulfide intermediate role is filled by cysteine 364.

This sequence belongs to the class-V pyridoxal-phosphate-dependent aminotransferase family. Csd subfamily. As to quaternary structure, homodimer. Interacts with SufE and the SufBCD complex composed of SufB, SufC and SufD. The interaction with SufE is required to mediate the direct transfer of the sulfur atom from the S-sulfanylcysteine. It depends on pyridoxal 5'-phosphate as a cofactor.

The protein localises to the cytoplasm. The catalysed reaction is (sulfur carrier)-H + L-cysteine = (sulfur carrier)-SH + L-alanine. It carries out the reaction L-selenocysteine + AH2 = hydrogenselenide + L-alanine + A + H(+). It participates in cofactor biosynthesis; iron-sulfur cluster biosynthesis. Its function is as follows. Cysteine desulfurases mobilize the sulfur from L-cysteine to yield L-alanine, an essential step in sulfur metabolism for biosynthesis of a variety of sulfur-containing biomolecules. Component of the suf operon, which is activated and required under specific conditions such as oxidative stress and iron limitation. Acts as a potent selenocysteine lyase in vitro, that mobilizes selenium from L-selenocysteine. Selenocysteine lyase activity is however unsure in vivo. This is Cysteine desulfurase from Cronobacter sakazakii (strain ATCC BAA-894) (Enterobacter sakazakii).